A 132-amino-acid chain; its full sequence is Small ribosomal subunit protein uS8c (132 aa).

The protein belongs to the universal ribosomal protein uS8 family. Part of the 30S ribosomal subunit.

The protein resides in the plastid. It localises to the chloroplast. One of the primary rRNA binding proteins, it binds directly to 16S rRNA central domain where it helps coordinate assembly of the platform of the 30S subunit. The protein is Small ribosomal subunit protein uS8c (rps8) of Gracilaria tenuistipitata var. liui (Red alga).